The following is a 72-amino-acid chain: SRY-related protein AES2 (72 aa).

Positions 1-69 form a DNA-binding region, HMG box; sequence VKRPMNAFMV…KHMADYPDYK (69 aa).

It localises to the nucleus. The polypeptide is SRY-related protein AES2 (Alligator mississippiensis (American alligator)).